A 247-amino-acid chain; its full sequence is V-type proton ATPase subunit D (247 aa).

This sequence belongs to the V-ATPase D subunit family. V-ATPase is a heteromultimeric enzyme made up of two complexes: the ATP-hydrolytic V1 complex and the proton translocation V0 complex. The V1 complex consists of three catalytic AB heterodimers that form a heterohexamer, three peripheral stalks each consisting of EG heterodimers, one central rotor including subunits D and F, and the regulatory subunits C and H. The proton translocation complex V0 consists of the proton transport subunit a, a ring of proteolipid subunits c9c'', rotary subunit d, subunits e and f, and the accessory subunits ATP6AP1/Ac45 and ATP6AP2/PRR. Interacts with SNX10.

Its subcellular location is the membrane. It localises to the cytoplasmic vesicle. It is found in the clathrin-coated vesicle membrane. The protein resides in the cytoplasm. The protein localises to the cytoskeleton. Its subcellular location is the microtubule organizing center. It localises to the centrosome. It is found in the cell projection. The protein resides in the cilium. Subunit of the V1 complex of vacuolar(H+)-ATPase (V-ATPase), a multisubunit enzyme composed of a peripheral complex (V1) that hydrolyzes ATP and a membrane integral complex (V0) that translocates protons. V-ATPase is responsible for acidifying and maintaining the pH of intracellular compartments and in some cell types, is targeted to the plasma membrane, where it is responsible for acidifying the extracellular environment. May play a role in cilium biogenesis through regulation of the transport and the localization of proteins to the cilium. This Oryctolagus cuniculus (Rabbit) protein is V-type proton ATPase subunit D (ATP6V1D).